The following is a 161-amino-acid chain: Nucleotide-binding protein Shew_2893 (161 aa).

This sequence belongs to the YajQ family.

In terms of biological role, nucleotide-binding protein. This Shewanella loihica (strain ATCC BAA-1088 / PV-4) protein is Nucleotide-binding protein Shew_2893.